A 624-amino-acid polypeptide reads, in one-letter code: PTS system mannitol-specific EIICBA component (624 aa).

The 324-residue stretch at 13–336 folds into the PTS EIIC type-2 domain; it reads FGRFLSNMVM…SFVIASFFLK (324 aa). The next 6 membrane-spanning stretches (helical) occupy residues 25 to 46, 51 to 71, 135 to 156, 166 to 186, 274 to 293, and 314 to 335; these read IGAF…WLPN, KLVG…SGGK, SSGI…PAVK, VDIL…EPAK, VIAG…AGLV, and VGVL…SFFL. The PTS EIIB type-2 domain occupies 372-463; it reads QKIFVACDAG…LVQDLSNTKV (92 aa). C378 functions as the Phosphocysteine intermediate; for EIIB activity in the catalytic mechanism. At C378 the chain carries Phosphocysteine; by EIIA. The 143-residue stretch at 482-624 folds into the PTS EIIA type-2 domain; it reads FVLTEKQVFL…VEKVLALLKA (143 aa). The active-site Tele-phosphohistidine intermediate; for EIIA activity is the H542. Position 542 is a phosphohistidine; by HPr (H542).

In terms of assembly, homodimer. An intramolecular phosphotransfer takes places between His-542 and Cys-378.

Its subcellular location is the cell inner membrane. It catalyses the reaction D-mannitol(out) + N(pros)-phospho-L-histidyl-[protein] = D-mannitol 1-phosphate(in) + L-histidyl-[protein]. The phosphoenolpyruvate-dependent sugar phosphotransferase system (sugar PTS), a major carbohydrate active transport system, catalyzes the phosphorylation of incoming sugar substrates concomitantly with their translocation across the cell membrane. This system is involved in D-mannitol transport. In Pasteurella multocida (strain Pm70), this protein is PTS system mannitol-specific EIICBA component (mtlA).